Reading from the N-terminus, the 214-residue chain is DELTA-actitoxin-Aeq1b (214 aa).

The N-terminal stretch at 1-19 (MSRLIIVFIVVTMICAATA) is a signal peptide. A propeptide spanning residues 20–35 (LSSKKSINEDEKDEKR) is cleaved from the precursor. Residues 38–47 (AVAGAVIEGA) are plays an important role in the hemolytic activity. The tract at residues 46–65 (GATLTFNVLQTVLKALGDIS) is N-terminal region. The phosphocholine site is built by Ser89, Val122, Ser140, Pro142, Tyr168, Tyr172, and Tyr173. The segment at 140-155 (SIPFDYNLYSNWWNVK) is trp-rich region, which is important for the binding to lipid membrane. Positions 179-181 (RGD) match the Cell attachment site, crucial for protein stability motif.

It belongs to the actinoporin family. Sea anemone subfamily. In terms of assembly, octamer or nonamer in membranes. Monomer in the soluble state.

The protein resides in the secreted. It is found in the nematocyst. It localises to the target cell membrane. Pore-forming protein that forms cations-selective hydrophilic pores of around 1 nm and causes cytolysis. Pore formation is a multi-step process that involves specific recognition of membrane sphingomyelin (but neither cholesterol nor phosphatidylcholine) using aromatic rich region and adjacent phosphocholine (POC) binding site, firm binding to the membrane (mainly driven by hydrophobic interactions) accompanied by the transfer of the N-terminal region to the lipid-water interface and finally pore formation after oligomerization of monomers. The sequence is that of DELTA-actitoxin-Aeq1b from Actinia equina (Beadlet anemone).